Consider the following 170-residue polypeptide: Adenine phosphoribosyltransferase (170 aa).

Belongs to the purine/pyrimidine phosphoribosyltransferase family. In terms of assembly, homodimer.

The protein resides in the cytoplasm. The catalysed reaction is AMP + diphosphate = 5-phospho-alpha-D-ribose 1-diphosphate + adenine. It functions in the pathway purine metabolism; AMP biosynthesis via salvage pathway; AMP from adenine: step 1/1. In terms of biological role, catalyzes a salvage reaction resulting in the formation of AMP, that is energically less costly than de novo synthesis. The polypeptide is Adenine phosphoribosyltransferase (Prochlorococcus marinus (strain MIT 9312)).